The chain runs to 327 residues: MISKDHLHHLDPLGTTKSYHMNTSTVSPPSPASSISLSQSAWLEVRLFYVRIAPCVVENVPDFLTLRHPRRETGASLEVNGVRVPSSQTASLKLRRDRVDRESSEVTYVSTETVRVTGCVDFEVYDNEDMVLCGNLDRIEGAWNNGTVSDPKTGWGMDCYIAMGNGHVSGPSASVFFQPKFGVSSPSVEVYIAGCCGGVPVILTKTIQASPRRKVARHVTLDAIPEDEEVGKEQDIGTIGDELARQSKVQMMESEVDEYDDSDMKMAQRYYPEGMYVDEDGQLSWFNAGVRVGVGIGLGMCLGVGIGVGLLMRSYQATTSNLRRRFL.

The tract at residues Pro12–Pro31 is disordered. 2 consecutive transmembrane segments (helical) span residues Val183–Leu203 and Val292–Met312.

The protein localises to the membrane. This is an uncharacterized protein from Arabidopsis thaliana (Mouse-ear cress).